A 165-amino-acid polypeptide reads, in one-letter code: Large ribosomal subunit protein uL15 (165 aa).

Over residues 1–29 (MTSKKKRQRGSRTHGGGSHKNRRGAGHRG) the composition is skewed to basic residues. Disordered regions lie at residues 1–59 (MTSK…QKVQ) and 133–165 (KVEGAGGSVELTDLGEERQAEAEETEDADADEE). Positions 30–47 (GRGDAGRDKHEFHNHEPL) are enriched in basic and acidic residues. Over residues 154-165 (AEETEDADADEE) the composition is skewed to acidic residues.

Belongs to the universal ribosomal protein uL15 family. In terms of assembly, part of the 50S ribosomal subunit. Interacts weakly with proteins L18e and L32e.

Binds to the 23S rRNA. The protein is Large ribosomal subunit protein uL15 (rpl15) of Haloarcula marismortui (strain ATCC 43049 / DSM 3752 / JCM 8966 / VKM B-1809) (Halobacterium marismortui).